The sequence spans 117 residues: UPF0231 protein HI_1724 (117 aa).

This sequence belongs to the UPF0231 family.

This Haemophilus influenzae (strain ATCC 51907 / DSM 11121 / KW20 / Rd) protein is UPF0231 protein HI_1724.